We begin with the raw amino-acid sequence, 466 residues long: Purple acid phosphatase 25 (466 aa).

The signal sequence occupies residues 1-21 (MRMNKILLVFVFLSIATVINS). A Fe cation-binding site is contributed by aspartate 164. N-linked (GlcNAc...) asparagine glycosylation occurs at asparagine 172. Fe cation-binding residues include aspartate 192 and tyrosine 195. Zn(2+) is bound at residue aspartate 192. Zn(2+) is bound by residues asparagine 229 and histidine 314. A substrate-binding site is contributed by asparagine 229. Histidine 324 functions as the Proton donor in the catalytic mechanism. Zn(2+) is bound at residue histidine 351. Residue 351–353 (HVH) coordinates substrate. Position 353 (histidine 353) interacts with Fe cation. N-linked (GlcNAc...) asparagine glycans are attached at residues asparagine 367 and asparagine 424.

The protein belongs to the metallophosphoesterase superfamily. Purple acid phosphatase family. Homodimer. Fe cation is required as a cofactor. It depends on Zn(2+) as a cofactor. As to expression, specifically expressed in flowers.

It localises to the secreted. The enzyme catalyses a phosphate monoester + H2O = an alcohol + phosphate. This Arabidopsis thaliana (Mouse-ear cress) protein is Purple acid phosphatase 25 (PAP25).